Here is a 427-residue protein sequence, read N- to C-terminus: MANLLETSIFFSSADKLLSFPPKNSQTHHLPFSAFINGGRKIRKSSTITFATDTVTYNGTTSAEVKSSVEDPMEVEVAEGYTMAQFCDKIIDLFLNEKPKVKQWKTYLVLRDEWNKYSVNFYKRCRIRADTETDPILKQKLVSLESKVKKIDKEMEKHNDLLKEIQENPTDINAIAAKRRRDFTGEFFRYVTLLSETLDGLEDRDAVARLATRCLSAVSAYDNTLESVETLDTAQAKFEDILNSPSVDSACEKIRSLAKAKELDSSLILLINSAYAAAKESQTVTNEAKDIMYHLYKATKSSLRSITPKEIKLLKYLLNITDPEERFSALATAFSPGDDHEAKDPKALYTTPKELHKWIKIMLDAYHLNKEETDIKEAKQMSQPIVIQRLFILKDTIEDEYLDKKTIVADETPKKEEEDTTIEDFLN.

A coiled-coil region spans residues 135-168 (PILKQKLVSLESKVKKIDKEMEKHNDLLKEIQEN).

This is an uncharacterized protein from Arabidopsis thaliana (Mouse-ear cress).